A 735-amino-acid chain; its full sequence is Ribosomal protein S6 kinase alpha-1 (735 aa).

A Phosphoserine modification is found at Ser54. The 260-residue stretch at 62–321 (FELLKVLGQG…AEEIKRHVFY (260 aa)) folds into the Protein kinase 1 domain. ATP-binding positions include 68-76 (LGQGSFGKV) and Lys94. The Proton acceptor role is filled by Asp187. Ser221 carries the post-translational modification Phosphoserine; by PDPK1. The residue at position 307 (Ser307) is a Phosphoserine. Positions 322–391 (STIDWNKLYR…VATGLMEDDG (70 aa)) constitute an AGC-kinase C-terminal domain. At Thr359 the chain carries Phosphothreonine. 2 positions are modified to phosphoserine: Ser363 and Ser369. At Ser380 the chain carries Phosphoserine; by autocatalysis. The region spanning 418 to 675 (YVVKETIGVG…AKQVLQHPWV (258 aa)) is the Protein kinase 2 domain. ATP contacts are provided by residues 424–432 (IGVGSYSEC) and Lys447. Asp535 serves as the catalytic Proton acceptor. At Thr573 the chain carries Phosphothreonine. The residue at position 732 (Ser732) is a Phosphoserine.

Belongs to the protein kinase superfamily. AGC Ser/Thr protein kinase family. S6 kinase subfamily. In terms of assembly, forms a complex with either MAPK1/ERK2 or MAPK3/ERK1 in quiescent cells. Transiently dissociates following mitogenic stimulation. Interacts with ETV1/ER81 and FGFR1. As to quaternary structure, (Microbial infection) Interacts with Kaposi's sarcoma-associated herpesvirus/HHV-8 protein ORF45; this interaction allows RPS6KA1 activation. It depends on Mg(2+) as a cofactor. Post-translationally, activated by phosphorylation at Ser-221 by PDPK1. Autophosphorylated on Ser-380, as part of the activation process. May be phosphorylated at Thr-359 and Ser-363 by MAPK1/ERK2 and MAPK3/ERK1. N-terminal myristoylation results in an activated kinase in the absence of added growth factors.

The protein resides in the nucleus. It is found in the cytoplasm. It catalyses the reaction L-seryl-[protein] + ATP = O-phospho-L-seryl-[protein] + ADP + H(+). It carries out the reaction L-threonyl-[protein] + ATP = O-phospho-L-threonyl-[protein] + ADP + H(+). With respect to regulation, upon extracellular signal or mitogen stimulation, phosphorylated at Thr-573 in the C-terminal kinase domain (CTKD) by MAPK1/ERK2 and MAPK3/ERK1. The activated CTKD then autophosphorylates Ser-380, allowing binding of PDPK1, which in turn phosphorylates Ser-221 in the N-terminal kinase domain (NTDK) leading to the full activation of the protein and subsequent phosphorylation of the substrates by the NTKD. Serine/threonine-protein kinase that acts downstream of ERK (MAPK1/ERK2 and MAPK3/ERK1) signaling and mediates mitogenic and stress-induced activation of the transcription factors CREB1, ETV1/ER81 and NR4A1/NUR77, regulates translation through RPS6 and EIF4B phosphorylation, and mediates cellular proliferation, survival, and differentiation by modulating mTOR signaling and repressing pro-apoptotic function of BAD and DAPK1. In fibroblast, is required for EGF-stimulated phosphorylation of CREB1, which results in the subsequent transcriptional activation of several immediate-early genes. In response to mitogenic stimulation (EGF and PMA), phosphorylates and activates NR4A1/NUR77 and ETV1/ER81 transcription factors and the cofactor CREBBP. Upon insulin-derived signal, acts indirectly on the transcription regulation of several genes by phosphorylating GSK3B at 'Ser-9' and inhibiting its activity. Phosphorylates RPS6 in response to serum or EGF via an mTOR-independent mechanism and promotes translation initiation by facilitating assembly of the pre-initiation complex. In response to insulin, phosphorylates EIF4B, enhancing EIF4B affinity for the EIF3 complex and stimulating cap-dependent translation. Is involved in the mTOR nutrient-sensing pathway by directly phosphorylating TSC2 at 'Ser-1798', which potently inhibits TSC2 ability to suppress mTOR signaling, and mediates phosphorylation of RPTOR, which regulates mTORC1 activity and may promote rapamycin-sensitive signaling independently of the PI3K/AKT pathway. Also involved in feedback regulation of mTORC1 and mTORC2 by phosphorylating DEPTOR. Mediates cell survival by phosphorylating the pro-apoptotic proteins BAD and DAPK1 and suppressing their pro-apoptotic function. Promotes the survival of hepatic stellate cells by phosphorylating CEBPB in response to the hepatotoxin carbon tetrachloride (CCl4). Mediates induction of hepatocyte prolifration by TGFA through phosphorylation of CEBPB. Is involved in cell cycle regulation by phosphorylating the CDK inhibitor CDKN1B, which promotes CDKN1B association with 14-3-3 proteins and prevents its translocation to the nucleus and inhibition of G1 progression. Phosphorylates EPHA2 at 'Ser-897', the RPS6KA-EPHA2 signaling pathway controls cell migration. In response to mTORC1 activation, phosphorylates EIF4B at 'Ser-406' and 'Ser-422' which stimulates bicarbonate cotransporter SLC4A7 mRNA translation, increasing SLC4A7 protein abundance and function. In terms of biological role, (Microbial infection) Promotes the late transcription and translation of viral lytic genes during Kaposi's sarcoma-associated herpesvirus/HHV-8 infection, when constitutively activated. This chain is Ribosomal protein S6 kinase alpha-1 (RPS6KA1), found in Homo sapiens (Human).